A 454-amino-acid chain; its full sequence is Chromosomal replication initiator protein DnaA (454 aa).

Residues 1–71 (MTKEQWGQLQ…HEVRQEDPAV (71 aa)) form a domain I, interacts with DnaA modulators region. The tract at residues 71–112 (VRRLRFAVPSHVNATTKPARPAQATAPRAPAEKTPRSTLSTA) is domain II. Residues 82-108 (VNATTKPARPAQATAPRAPAEKTPRST) form a disordered region. Residues 84–99 (ATTKPARPAQATAPRA) are compositionally biased toward low complexity. Positions 113-334 (PLDARFTFDN…GALTRLCAFA (222 aa)) are domain III, AAA+ region. ATP-binding residues include glycine 157, glycine 159, lysine 160, and threonine 161. Positions 335 to 454 (SLVGREIDME…LELLRRALEE (120 aa)) are domain IV, binds dsDNA.

This sequence belongs to the DnaA family. As to quaternary structure, oligomerizes as a right-handed, spiral filament on DNA at oriC.

It localises to the cytoplasm. In terms of biological role, plays an essential role in the initiation and regulation of chromosomal replication. ATP-DnaA binds to the origin of replication (oriC) to initiate formation of the DNA replication initiation complex once per cell cycle. Binds the DnaA box (a 9 base pair repeat at the origin) and separates the double-stranded (ds)DNA. Forms a right-handed helical filament on oriC DNA; dsDNA binds to the exterior of the filament while single-stranded (ss)DNA is stabiized in the filament's interior. The ATP-DnaA-oriC complex binds and stabilizes one strand of the AT-rich DNA unwinding element (DUE), permitting loading of DNA polymerase. After initiation quickly degrades to an ADP-DnaA complex that is not apt for DNA replication. Binds acidic phospholipids. The chain is Chromosomal replication initiator protein DnaA from Roseobacter denitrificans (strain ATCC 33942 / OCh 114) (Erythrobacter sp. (strain OCh 114)).